Reading from the N-terminus, the 1893-residue chain is CDK5 regulatory subunit-associated protein 2 (1893 aa).

Residues 51 to 94 (TVSPTRARNMKDFENQITELKKENFNLKLRIYFLEERMQQEFHG) are CM1 motif; interacts with the gTuRC. Residues 58–196 (RNMKDFENQI…TEKALRLRLE (139 aa)) are interaction with NCKAP5L. A Phosphoserine modification is found at Ser547. An interaction with MAPRE1 region spans residues 926–1208 (PGITNREAKK…LENLKQQLEE (283 aa)). Thr1001 carries the post-translational modification Phosphothreonine. 2 disordered regions span residues 1015-1071 (AAYQ…NPED) and 1084-1105 (SKSQ…SINT). The segment covering 1034-1048 (WRDKEMDSDQQRSYE) has biased composition (basic and acidic residues). Ser1238 bears the Phosphoserine mark. A disordered region spans residues 1347–1381 (LPESPEPSASHALSDYETSEKSFFSRDQKQDNETE). Basic and acidic residues predominate over residues 1364-1381 (TSEKSFFSRDQKQDNETE). Ser1490 is modified (phosphoserine). Basic and acidic residues-rich tracts occupy residues 1500 to 1519 (SVKE…ERHN) and 1651 to 1661 (PDKHDGDKYPM). Disordered regions lie at residues 1500–1521 (SVKE…HNQQ), 1646–1706 (EVPL…ATST), and 1754–1774 (QTQE…PHPA). 2 positions are modified to phosphoserine: Ser1663 and Ser1666. 2 stretches are compositionally biased toward polar residues: residues 1663–1706 (SDNS…ATST) and 1754–1766 (QTQE…SQEL). Residues 1726–1768 (HVLGLIEDYEALLKQISQGQRLLAEMDIQTQEAPSSTSQELGT) form an interaction with CDK5R1 region. Positions 1726 to 1893 (HVLGLIEDYE…GTCSPSRPGS (168 aa)) are interaction with PCNT and AKAP9. Residues 1861–1870 (VVTHKILRKA) form a required for centrosomal attachment, Golgi localization and CALM1 interaction region. Phosphoserine is present on Ser1893.

Homodimer. Interacts with CDK5R1 (p35 form). CDK5RAP1, CDK5RAP2 and CDK5RAP3 show competitive binding to CDK5R1. May form a complex with CDK5R1 and CDK5. Interacts with pericentrin/PCNT; the interaction is leading to centrosomal and Golgi localization of CDK5RAP2 and PCNT. Interacts with AKAP9; the interaction targets CDK5RAP2 and AKAP9 to Golgi apparatus. Interacts with MAPRE1; the interaction is direct and targets CDK5RAP2 and EB1/MAPRE1 to microtubule plus ends. Interacts with TUBG1; the interaction is leading to the centrosomal localization of CDK5RAP2 and TUBG1. Interacts with TUBGCP3. Interacts with CALM1. Interacts with CDC20. Interacts with CEP68; degradation of CEP68 in early mitosis leads to removal of CDK5RAP2 from the centrosome which promotes centriole disengagement and subsequent centriole separation. Interacts with NCKAP5L. Forms a pericentrosomal complex with AKAP9, MAPRE1 and PDE4DIP isoform 13/MMG8/SMYLE; within this complex, MAPRE1 binding to CDK5RAP2 may be mediated by PDE4DIP. Interacts with LGALS3BP; this interaction may connect the pericentrosomal complex to the gamma-tubulin ring complex (gTuRC) to promote microtubule assembly and acetylation. Interacts with CCDC66. Associates (via CM1 motif) with TUBGCP2 of the gTuRC; the interaction plays a role in gTuRC activation. Post-translationally, phosphorylated in vitro by CDK5. As to expression, widely expressed. Expressed in heart, brain, placenta, lung, liver, skeletal muscle, kidney and pancreas.

The protein localises to the cytoplasm. The protein resides in the cytoskeleton. It localises to the microtubule organizing center. It is found in the centrosome. Its subcellular location is the golgi apparatus. In terms of biological role, potential regulator of CDK5 activity via its interaction with CDK5R1. Negative regulator of centriole disengagement (licensing) which maintains centriole engagement and cohesion. Involved in regulation of mitotic spindle orientation. Plays a role in the spindle checkpoint activation by acting as a transcriptional regulator of both BUBR1 and MAD2 promoter. Together with EB1/MAPRE1, may promote microtubule polymerization, bundle formation, growth and dynamics at the plus ends. Regulates centrosomal maturation by recruitment of the gamma-tubulin ring complex (gTuRC) onto centrosomes. In complex with PDE4DIP isoform 13/MMG8/SMYLE, MAPRE1 and AKAP9, contributes to microtubules nucleation and extension from the centrosome to the cell periphery. Required for the recruitment of AKAP9 to centrosomes. Plays a role in neurogenesis. This is CDK5 regulatory subunit-associated protein 2 (CDK5RAP2) from Homo sapiens (Human).